Consider the following 101-residue polypeptide: Trp operon repressor homolog (101 aa).

Residues 59–82 (QREIQQNLNTSAATITRGSNMLKL) mediate DNA binding.

Belongs to the TrpR family. As to quaternary structure, homodimer.

The protein resides in the cytoplasm. Its function is as follows. This protein is an aporepressor. When complexed with L-tryptophan it binds the operator region of the trp operon and prevents the initiation of transcription. The protein is Trp operon repressor homolog of Mannheimia succiniciproducens (strain KCTC 0769BP / MBEL55E).